Reading from the N-terminus, the 91-residue chain is Elongation factor 1-beta (91 aa).

Belongs to the EF-1-beta/EF-1-delta family.

Promotes the exchange of GDP for GTP in EF-1-alpha/GDP, thus allowing the regeneration of EF-1-alpha/GTP that could then be used to form the ternary complex EF-1-alpha/GTP/AAtRNA. The chain is Elongation factor 1-beta from Metallosphaera sedula (strain ATCC 51363 / DSM 5348 / JCM 9185 / NBRC 15509 / TH2).